A 503-amino-acid chain; its full sequence is Ferulic acid decarboxylase 1 (503 aa).

Asn-170, His-193, and Glu-236 together coordinate Mn(2+). Prenylated FMN-binding positions include 170-175 (NWSIAR), 192-193 (QH), and Glu-236. The Proton donor role is filled by Glu-285. Position 394 (Lys-394) interacts with prenylated FMN.

The protein belongs to the UbiD family. UbiD-like/FDC subfamily. Homodimer. May form higher order oligomers. Requires Mn(2+) as cofactor. It depends on prenylated FMN as a cofactor.

The protein resides in the cytoplasm. The catalysed reaction is (E)-4-coumarate + H(+) = 4-vinylphenol + CO2. It carries out the reaction (E)-cinnamate + H(+) = styrene + CO2. It catalyses the reaction (E)-ferulate + H(+) = 2-methoxy-4-vinylphenol + CO2. Functionally, catalyzes the reversible decarboxylation of aromatic carboxylic acids like ferulic acid, p-coumaric acid or cinnamic acid, producing the corresponding vinyl derivatives 4-vinylphenol, 4-vinylguaiacol, and styrene, respectively, which play the role of aroma metabolites. Not essential for ubiquinone synthesis. The sequence is that of Ferulic acid decarboxylase 1 from Saccharomyces cerevisiae (strain ATCC 204508 / S288c) (Baker's yeast).